The sequence spans 460 residues: Phosphomethylpyrimidine synthase (460 aa).

Substrate contacts are provided by residues N80, M109, Y138, H174, S194–G196, D235–R238, and E274. Position 278 (H278) interacts with Zn(2+). Y301 lines the substrate pocket. H342 is a binding site for Zn(2+). Residues C422, C425, and C430 each contribute to the [4Fe-4S] cluster site.

This sequence belongs to the ThiC family. In terms of assembly, homodimer. [4Fe-4S] cluster is required as a cofactor.

The enzyme catalyses 5-amino-1-(5-phospho-beta-D-ribosyl)imidazole + S-adenosyl-L-methionine = 4-amino-2-methyl-5-(phosphooxymethyl)pyrimidine + CO + 5'-deoxyadenosine + formate + L-methionine + 3 H(+). It functions in the pathway cofactor biosynthesis; thiamine diphosphate biosynthesis. In terms of biological role, catalyzes the synthesis of the hydroxymethylpyrimidine phosphate (HMP-P) moiety of thiamine from aminoimidazole ribotide (AIR) in a radical S-adenosyl-L-methionine (SAM)-dependent reaction. The protein is Phosphomethylpyrimidine synthase of Sulfurimonas denitrificans (strain ATCC 33889 / DSM 1251) (Thiomicrospira denitrificans (strain ATCC 33889 / DSM 1251)).